A 463-amino-acid polypeptide reads, in one-letter code: Dialkyldecalin synthase (463 aa).

FAD is bound by residues Val-13, 32–33, Ile-121, and Asp-275; that span reads ER.

This sequence belongs to the PheA/TfdB FAD monooxygenase family. Homodimer. The cofactor is FAD.

It catalyses the reaction 4-[(2E,7S,8E,10E,13R,14R,16E,18E)-14-ethyl-7,13-dihydroxy-2,16,18-trimethylicosa-2,8,10,16,18-pentaenoyl]-2-methylidene-5-oxo-2,5-dihydro-1H-pyrrol-3-olate = 4-[(1R,2R,4aS,5S,8aR)-2-[(2R,3R,5E,7E)-3-ethyl-2-hydroxy-5,7-dimethylnona-5,7-dien-1-yl]-5-hydroxy-1-methyl-1,2,4a,5,6,7,8,8a-octahydronaphthalene-1-carbonyl]-2-methylidene-5-oxo-2,5-dihydro-1H-pyrrol-3-olate. It functions in the pathway antibiotic biosynthesis. In terms of biological role, involved in the biosynthesis of the spirotetramate antibiotics pyrroindomycins. Catalyzes the intramolecular cyclization forming the dialkyldecalin moiety in pyrroindomycins, via an endo-selective [4+2] cycloaddition reaction. In Streptomyces rugosporus, this protein is Dialkyldecalin synthase.